The primary structure comprises 306 residues: Stimulator of interferon genes protein 5 (306 aa).

The segment at 1 to 50 (MMSNDSQSEKRTAKWTGSGTPIAEGEESSSPSAHQTRQKATAADDDDDQQ) is disordered. Residues Tyr-119, Arg-180, and Arg-186 each contribute to the 2',3'-cGAMP site.

The protein belongs to the STING family.

Facilitator of innate immune signaling that acts as a sensor of second messenger signals produced by cyclic GMP-AMP synthase-like receptors (cGLRs) and promotes the production of type I interferon. Innate immune response is triggered in response to nucleotides from viruses and bacteria delivered to the cytoplasm. Acts by binding cyclic dinucleotides: recognizes and binds 2'-3' linked cGAMP (2'-3'-cGAMP), a second messengers produced by cGLRs in response to nucleotides in the cytosol, such as double-stranded RNA (dsRNA). Upon binding to 2'-3'-cGAMP, oligomerizes and promotes the recruitment and subsequent activation of the transcription factor IRF3 to induce expression of type I interferon. This is Stimulator of interferon genes protein 5 from Stylophora pistillata (Smooth cauliflower coral).